A 206-amino-acid chain; its full sequence is MARYIGPKCKLARREGTDLFLKSARRSLDSKCKIDSAPGQHGAKKPRLSDYGLQLREKQKIRRIYGVLERQFRRYFAEADRRKGSTGELLLQLLESRLDNVVYRMGFGSTRAEARQLVSHKAIVVNGQVVNIPSFQVKAGDVVSVREKAKKQVRIQEALGLATQIGLPGWVSVDADKLEGVFKNMPDRSELTGDINEQLVVEFYSK.

The region spanning 96-157 (SRLDNVVYRM…KAKKQVRIQE (62 aa)) is the S4 RNA-binding domain.

It belongs to the universal ribosomal protein uS4 family. As to quaternary structure, part of the 30S ribosomal subunit. Contacts protein S5. The interaction surface between S4 and S5 is involved in control of translational fidelity.

One of the primary rRNA binding proteins, it binds directly to 16S rRNA where it nucleates assembly of the body of the 30S subunit. In terms of biological role, with S5 and S12 plays an important role in translational accuracy. The polypeptide is Small ribosomal subunit protein uS4 (Neisseria gonorrhoeae (strain ATCC 700825 / FA 1090)).